Consider the following 885-residue polypeptide: Leucine--tRNA ligase (885 aa).

A 'HIGH' region motif is present at residues 53–63; sequence PYPSGKLHMGH. The short motif at 631-635 is the 'KMSKS' region element; sequence KMSKS. An ATP-binding site is contributed by Lys-634.

Belongs to the class-I aminoacyl-tRNA synthetase family.

The protein localises to the cytoplasm. The enzyme catalyses tRNA(Leu) + L-leucine + ATP = L-leucyl-tRNA(Leu) + AMP + diphosphate. In Psychrobacter sp. (strain PRwf-1), this protein is Leucine--tRNA ligase.